The sequence spans 399 residues: 3-phosphoshikimate 1-carboxyvinyltransferase (399 aa).

The 3-phosphoshikimate site is built by Lys-19, Ser-20, and Arg-24. A phosphoenolpyruvate-binding site is contributed by Lys-19. Residues Gly-83 and Arg-111 each coordinate phosphoenolpyruvate. Ser-152, Ser-153, Gln-154, Asp-288, Gln-310, and Lys-314 together coordinate 3-phosphoshikimate. Residue Gln-154 coordinates phosphoenolpyruvate. Asp-288 serves as the catalytic Proton acceptor. 3 residues coordinate phosphoenolpyruvate: Arg-318, Arg-359, and Lys-385.

This sequence belongs to the EPSP synthase family. As to quaternary structure, monomer.

Its subcellular location is the cytoplasm. The catalysed reaction is 3-phosphoshikimate + phosphoenolpyruvate = 5-O-(1-carboxyvinyl)-3-phosphoshikimate + phosphate. It participates in metabolic intermediate biosynthesis; chorismate biosynthesis. Catalyzes the transfer of the enolpyruvyl moiety of phosphoenolpyruvate (PEP) to the 5-hydroxyl of shikimate-3-phosphate (S3P) to produce enolpyruvyl shikimate-3-phosphate and inorganic phosphate. In Thermococcus kodakarensis (strain ATCC BAA-918 / JCM 12380 / KOD1) (Pyrococcus kodakaraensis (strain KOD1)), this protein is 3-phosphoshikimate 1-carboxyvinyltransferase.